A 308-amino-acid polypeptide reads, in one-letter code: Aspartate carbamoyltransferase catalytic subunit (308 aa).

Carbamoyl phosphate-binding residues include arginine 59 and threonine 60. Lysine 87 is an L-aspartate binding site. 3 residues coordinate carbamoyl phosphate: arginine 109, histidine 139, and glutamine 142. L-aspartate contacts are provided by arginine 172 and arginine 224. Alanine 265 and proline 266 together coordinate carbamoyl phosphate.

It belongs to the aspartate/ornithine carbamoyltransferase superfamily. ATCase family. As to quaternary structure, heterododecamer (2C3:3R2) of six catalytic PyrB chains organized as two trimers (C3), and six regulatory PyrI chains organized as three dimers (R2).

It catalyses the reaction carbamoyl phosphate + L-aspartate = N-carbamoyl-L-aspartate + phosphate + H(+). The protein operates within pyrimidine metabolism; UMP biosynthesis via de novo pathway; (S)-dihydroorotate from bicarbonate: step 2/3. Its function is as follows. Catalyzes the condensation of carbamoyl phosphate and aspartate to form carbamoyl aspartate and inorganic phosphate, the committed step in the de novo pyrimidine nucleotide biosynthesis pathway. This is Aspartate carbamoyltransferase catalytic subunit from Enterococcus faecalis (strain ATCC 700802 / V583).